Consider the following 343-residue polypeptide: tRNA N6-adenosine threonylcarbamoyltransferase (343 aa).

2 residues coordinate Fe cation: His-111 and His-115. Substrate-binding positions include 135–139, Asp-168, Gly-181, and Asn-280; that span reads VLSGG. Asp-306 serves as a coordination point for Fe cation.

The protein belongs to the KAE1 / TsaD family. It depends on Fe(2+) as a cofactor.

It is found in the cytoplasm. It catalyses the reaction L-threonylcarbamoyladenylate + adenosine(37) in tRNA = N(6)-L-threonylcarbamoyladenosine(37) in tRNA + AMP + H(+). Functionally, required for the formation of a threonylcarbamoyl group on adenosine at position 37 (t(6)A37) in tRNAs that read codons beginning with adenine. Is involved in the transfer of the threonylcarbamoyl moiety of threonylcarbamoyl-AMP (TC-AMP) to the N6 group of A37, together with TsaE and TsaB. TsaD likely plays a direct catalytic role in this reaction. The chain is tRNA N6-adenosine threonylcarbamoyltransferase from Protochlamydia amoebophila (strain UWE25).